The primary structure comprises 220 residues: Charged multivesicular body protein 5 (220 aa).

The span at 1–10 (MNRIFGRGKP) shows a compositional bias: basic residues. The disordered stretch occupies residues 1-27 (MNRIFGRGKPKGPPPNLTDCISGVDSR). Coiled-coil stretches lie at residues 25–55 (DSRAESVDKKIARLDAELMKYKDQMKKMRDG) and 121–153 (KNVKIDQIEDLQDQLEDMMEDANEVQEALSRSY). Residues 178 to 206 (DDNSYLDEASSAPAIPEGAPGDRTTNRDG) are disordered.

This sequence belongs to the SNF7 family. Probable peripherally associated component of the endosomal sorting required for transport complex III (ESCRT-III).

The protein localises to the cytoplasm. Its subcellular location is the cytosol. The protein resides in the endosome membrane. In terms of biological role, probable peripherally associated component of the endosomal sorting required for transport complex III (ESCRT-III) which is involved in multivesicular bodies (MVBs) formation and sorting of endosomal cargo proteins into MVBs. MVBs contain intraluminal vesicles (ILVs) that are generated by invagination and scission from the limiting membrane of the endosome and mostly are delivered to lysosomes enabling degradation of membrane proteins, such as stimulated growth factor receptors, lysosomal enzymes and lipids. This chain is Charged multivesicular body protein 5 (chmp5), found in Danio rerio (Zebrafish).